The sequence spans 211 residues: Adenylate kinase (211 aa).

ATP is bound at residue 10-15; the sequence is GAGKGT. The NMP stretch occupies residues 30–59; the sequence is STGGILRAAIQKQTALGKKVQKVVEVGGLV. Residues Thr31, Arg36, 57-59, 85-88, and Gln92 each bind AMP; these read GLV and GFPR. An LID region spans residues 121–158; that stretch reads GRRVCSACGSSYHVLFAQPKREGVCDRCRGVLVVREDD. Arg122 contacts ATP. Positions 125 and 128 each coordinate Zn(2+). An ATP-binding site is contributed by 131 to 132; the sequence is SY. Zn(2+) contacts are provided by Cys145 and Cys148. AMP is bound by residues Arg155 and Arg166. Pro194 is an ATP binding site.

This sequence belongs to the adenylate kinase family. As to quaternary structure, monomer.

It localises to the cytoplasm. It catalyses the reaction AMP + ATP = 2 ADP. Its pathway is purine metabolism; AMP biosynthesis via salvage pathway; AMP from ADP: step 1/1. Functionally, catalyzes the reversible transfer of the terminal phosphate group between ATP and AMP. Plays an important role in cellular energy homeostasis and in adenine nucleotide metabolism. This is Adenylate kinase from Treponema pallidum (strain Nichols).